Consider the following 154-residue polypeptide: D-aminoacyl-tRNA deacylase (154 aa).

A Gly-cisPro motif, important for rejection of L-amino acids motif is present at residues 142-143 (GP).

It belongs to the DTD family. As to quaternary structure, homodimer.

The protein localises to the cytoplasm. It catalyses the reaction glycyl-tRNA(Ala) + H2O = tRNA(Ala) + glycine + H(+). The catalysed reaction is a D-aminoacyl-tRNA + H2O = a tRNA + a D-alpha-amino acid + H(+). Functionally, an aminoacyl-tRNA editing enzyme that deacylates mischarged D-aminoacyl-tRNAs. Also deacylates mischarged glycyl-tRNA(Ala), protecting cells against glycine mischarging by AlaRS. Acts via tRNA-based rather than protein-based catalysis; rejects L-amino acids rather than detecting D-amino acids in the active site. By recycling D-aminoacyl-tRNA to D-amino acids and free tRNA molecules, this enzyme counteracts the toxicity associated with the formation of D-aminoacyl-tRNA entities in vivo and helps enforce protein L-homochirality. The chain is D-aminoacyl-tRNA deacylase from Polaromonas naphthalenivorans (strain CJ2).